The primary structure comprises 546 residues: Chaperonin GroEL (546 aa).

Residues 29-32, Lys-50, 86-90, Gly-414, 477-479, and Asp-493 contribute to the ATP site; these read TLGP, DGTTT, and NAL. The interval 522-546 is disordered; sequence KPEKDAPNPMAGMGGGGMGGMGGMM. A compositionally biased stretch (gly residues) spans 533 to 546; sequence GMGGGGMGGMGGMM.

The protein belongs to the chaperonin (HSP60) family. As to quaternary structure, forms a cylinder of 14 subunits composed of two heptameric rings stacked back-to-back. Interacts with the co-chaperonin GroES.

The protein localises to the cytoplasm. It carries out the reaction ATP + H2O + a folded polypeptide = ADP + phosphate + an unfolded polypeptide.. In terms of biological role, together with its co-chaperonin GroES, plays an essential role in assisting protein folding. The GroEL-GroES system forms a nano-cage that allows encapsulation of the non-native substrate proteins and provides a physical environment optimized to promote and accelerate protein folding. This Leptospira borgpetersenii serovar Hardjo-bovis (strain JB197) protein is Chaperonin GroEL.